The sequence spans 358 residues: Fructose-bisphosphate aldolase (358 aa).

Ser62 lines the D-glyceraldehyde 3-phosphate pocket. The active-site Proton donor is Asp109. His110, Asp144, Glu174, and His226 together coordinate Zn(2+). Gly227 provides a ligand contact to dihydroxyacetone phosphate. Residue His264 participates in Zn(2+) binding. Residues 265–267 and 286–289 contribute to the dihydroxyacetone phosphate site; these read GGS and NIDT.

It belongs to the class II fructose-bisphosphate aldolase family. Zn(2+) is required as a cofactor.

It catalyses the reaction beta-D-fructose 1,6-bisphosphate = D-glyceraldehyde 3-phosphate + dihydroxyacetone phosphate. It functions in the pathway carbohydrate degradation; glycolysis; D-glyceraldehyde 3-phosphate and glycerone phosphate from D-glucose: step 4/4. Its function is as follows. Catalyzes the aldol condensation of dihydroxyacetone phosphate (DHAP or glycerone-phosphate) with glyceraldehyde 3-phosphate (G3P) to form fructose 1,6-bisphosphate (FBP) in gluconeogenesis and the reverse reaction in glycolysis. This Edwardsiella ictaluri (strain 93-146) protein is Fructose-bisphosphate aldolase (fba).